A 102-amino-acid polypeptide reads, in one-letter code: UV-induced protein uvi31 (102 aa).

This sequence belongs to the BolA/IbaG family.

It localises to the mitochondrion matrix. It is found in the cytoplasm. Its subcellular location is the nucleus. Its function is as follows. Acts as a mitochondrial iron-sulfur (Fe-S) cluster assembly factor that facilitates [4Fe-4S] cluster insertion into a subset of mitochondrial proteins such as lipoyl synthase (LS) and succinate dehydrogenase (SDH). Required during the last step of iron-sulfur protein assembly when the iron-sulfur cluster is inserted into the target protein. Probably acts together with the monothiol glutaredoxin grx5. Not required for [2Fe-2S] cluster insertion into mitochondrial proteins. May be involved in control of cell division, especially during the resumption from cell cycle arrest. The polypeptide is UV-induced protein uvi31 (Schizosaccharomyces pombe (strain 972 / ATCC 24843) (Fission yeast)).